The chain runs to 565 residues: Adenine deaminase 1 (565 aa).

Belongs to the metallo-dependent hydrolases superfamily. Adenine deaminase family. Mn(2+) serves as cofactor.

The catalysed reaction is adenine + H2O + H(+) = hypoxanthine + NH4(+). This chain is Adenine deaminase 1, found in Rhizobium meliloti (strain 1021) (Ensifer meliloti).